The primary structure comprises 358 residues: PDZ and LIM domain protein 3 (358 aa).

The 84-residue stretch at 1 to 84 folds into the PDZ domain; it reads MPQNVLLPGP…QLCLKIDRAE (84 aa). 2 disordered regions span residues 126-155 and 237-274; these read FILP…SVST and DTEH…RAPV. A compositionally biased stretch (low complexity) spans 129 to 146; that stretch reads PGRSSGSSTPSGFDPGSG. The 60-residue stretch at 288 to 347 folds into the LIM zinc-binding domain; that stretch reads PICDRCGNGIVGTVVKAKDKLRHPDCFVCSDCNLNLKQKGYFFVEGQLYCEAHARARMRP.

Its subcellular location is the cytoplasm. The protein resides in the myofibril. It localises to the sarcomere. It is found in the z line. Its function is as follows. May play a role in the organization of actin filament arrays within muscle cells. The chain is PDZ and LIM domain protein 3 (pdlim3) from Xenopus laevis (African clawed frog).